Consider the following 1126-residue polypeptide: Carbamoyl phosphate synthase large chain (1126 aa).

A carboxyphosphate synthetic domain region spans residues 1–402; sequence MPKRTDIKSV…SLGKAMRSID (402 aa). ATP-binding residues include Arg-129, Arg-169, Gly-175, Gly-176, Glu-208, Ile-210, Glu-215, Gly-241, Val-242, His-243, Gln-285, and Glu-299. The ATP-grasp 1 domain maps to 133–328; that stretch reads KKVVEEAGAE…IAKIATKLAL (196 aa). 3 residues coordinate Mg(2+): Gln-285, Glu-299, and Asn-301. Mn(2+)-binding residues include Gln-285, Glu-299, and Asn-301. An oligomerization domain region spans residues 403–551; the sequence is KRHMGFNWDG…YYYSCYADET (149 aa). A carbamoyl phosphate synthetic domain region spans residues 552–962; that stretch reads ELRPRDREAV…AFAKSQLAAY (411 aa). An ATP-grasp 2 domain is found at 681–881; it reads GEVLKKADMN…LAKAAARIMV (201 aa). 10 residues coordinate ATP: Arg-717, Lys-765, Leu-767, Glu-772, Gly-797, Val-798, His-799, Ser-800, Gln-840, and Glu-852. The Mg(2+) site is built by Gln-840, Glu-852, and Asn-854. Gln-840, Glu-852, and Asn-854 together coordinate Mn(2+). The interval 963 to 1126 is allosteric domain; that stretch reads EGGLPTSGNV…TQLFELESRD (164 aa). The MGS-like domain maps to 964 to 1126; the sequence is GGLPTSGNVF…TQLFELESRD (163 aa).

Belongs to the CarB family. Composed of two chains; the small (or glutamine) chain promotes the hydrolysis of glutamine to ammonia, which is used by the large (or ammonia) chain to synthesize carbamoyl phosphate. Tetramer of heterodimers (alpha,beta)4. Mg(2+) is required as a cofactor. It depends on Mn(2+) as a cofactor.

It carries out the reaction hydrogencarbonate + L-glutamine + 2 ATP + H2O = carbamoyl phosphate + L-glutamate + 2 ADP + phosphate + 2 H(+). It catalyses the reaction hydrogencarbonate + NH4(+) + 2 ATP = carbamoyl phosphate + 2 ADP + phosphate + 2 H(+). It participates in amino-acid biosynthesis; L-arginine biosynthesis; carbamoyl phosphate from bicarbonate: step 1/1. The protein operates within pyrimidine metabolism; UMP biosynthesis via de novo pathway; (S)-dihydroorotate from bicarbonate: step 1/3. Functionally, large subunit of the glutamine-dependent carbamoyl phosphate synthetase (CPSase). CPSase catalyzes the formation of carbamoyl phosphate from the ammonia moiety of glutamine, carbonate, and phosphate donated by ATP, constituting the first step of 2 biosynthetic pathways, one leading to arginine and/or urea and the other to pyrimidine nucleotides. The large subunit (synthetase) binds the substrates ammonia (free or transferred from glutamine from the small subunit), hydrogencarbonate and ATP and carries out an ATP-coupled ligase reaction, activating hydrogencarbonate by forming carboxy phosphate which reacts with ammonia to form carbamoyl phosphate. The polypeptide is Carbamoyl phosphate synthase large chain (Bifidobacterium adolescentis (strain ATCC 15703 / DSM 20083 / NCTC 11814 / E194a)).